We begin with the raw amino-acid sequence, 163 residues long: Putative pre-16S rRNA nuclease (163 aa).

It belongs to the YqgF nuclease family.

The protein resides in the cytoplasm. Functionally, could be a nuclease involved in processing of the 5'-end of pre-16S rRNA. This Chlamydia caviae (strain ATCC VR-813 / DSM 19441 / 03DC25 / GPIC) (Chlamydophila caviae) protein is Putative pre-16S rRNA nuclease.